The following is a 396-amino-acid chain: Elongation factor Tu (396 aa).

Positions 10–206 constitute a tr-type G domain; sequence KPHVNVGTIG…ALDTYIPEPE (197 aa). Residues 19-26 are G1; sequence GHVDHGKT. GTP is bound at residue 19 to 26; it reads GHVDHGKT. Threonine 26 serves as a coordination point for Mg(2+). Residues 60–64 are G2; the sequence is GITIN. The G3 stretch occupies residues 81 to 84; it reads DCPG. GTP is bound by residues 81-85 and 136-139; these read DCPGH and NKAD. Residues 136 to 139 form a G4 region; the sequence is NKAD. The segment at 174–176 is G5; it reads SAL.

This sequence belongs to the TRAFAC class translation factor GTPase superfamily. Classic translation factor GTPase family. EF-Tu/EF-1A subfamily. In terms of assembly, monomer.

It is found in the cytoplasm. The catalysed reaction is GTP + H2O = GDP + phosphate + H(+). Its function is as follows. GTP hydrolase that promotes the GTP-dependent binding of aminoacyl-tRNA to the A-site of ribosomes during protein biosynthesis. The polypeptide is Elongation factor Tu (Thiobacillus denitrificans (strain ATCC 25259 / T1)).